The chain runs to 489 residues: MSAASQRVDAFGEEAGYHKGLKPRQLQMIGIGGAIGTGLFLGASGRLAKAGPGLFLVYGVCGVFVFLILRALGELVLHRPSSGSFVSYAREFFGEKAAYAVGWMYFLHWAMTSIVDTTAIATYLQRWTIFTVVPQWILALIALTVVLSMNLISVEWFGELEFWAALIKVLALMAFLVVGTVFLAGRYPVDGHSTGLSLWNNHGGLFPTSWLPLLIVTSGVVFAYSAVELVGTAAGETAEPEKIMPRAINSVVARIAIFYVGSVALLALLLPYTAYKAGESPFVTFFSKIGFHGAGDLMNIVVLTAALSSLNAGLYSTGRVMHSIAMSGSAPRFTARMSKSGVPYGGIVLTAVITLFGVALNAFKPGEAFEIVLNMSALGIIAGWATIVLCQLRLHKLANAGIMQRPRFRMPFSPYSGYLTLLFLLVVLVTMASDKPIGTWTVATLIIVIPALTAGWYLVRKRVMAVARERLGHTGPFPAVANPPVRSRD.

The next 12 helical transmembrane spans lie at 25 to 45 (QLQMIGIGGAIGTGLFLGASG), 49 to 69 (KAGPGLFLVYGVCGVFVFLIL), 100 to 120 (AVGWMYFLHWAMTSIVDTTAI), 137 to 157 (ILALIALTVVLSMNLISVEWF), 162 to 182 (FWAALIKVLALMAFLVVGTVF), 210 to 230 (WLPLLIVTSGVVFAYSAVELV), 255 to 275 (IAIFYVGSVALLALLLPYTAY), 289 to 309 (IGFHGAGDLMNIVVLTAALSS), 344 to 364 (YGGIVLTAVITLFGVALNAFK), 369 to 389 (FEIVLNMSALGIIAGWATIVL), 413 to 433 (SPYSGYLTLLFLLVVLVTMAS), and 439 to 459 (TWTVATLIIVIPALTAGWYLV).

It belongs to the amino acid-polyamine-organocation (APC) superfamily. Amino acid transporter (AAT) (TC 2.A.3.1) family.

It is found in the cell membrane. In Mycobacterium bovis (strain ATCC BAA-935 / AF2122/97), this protein is L-asparagine permease 1 (ansP1).